We begin with the raw amino-acid sequence, 110 residues long: Large ribosomal subunit protein uL22 (110 aa).

The protein belongs to the universal ribosomal protein uL22 family. As to quaternary structure, part of the 50S ribosomal subunit.

In terms of biological role, this protein binds specifically to 23S rRNA; its binding is stimulated by other ribosomal proteins, e.g. L4, L17, and L20. It is important during the early stages of 50S assembly. It makes multiple contacts with different domains of the 23S rRNA in the assembled 50S subunit and ribosome. Its function is as follows. The globular domain of the protein is located near the polypeptide exit tunnel on the outside of the subunit, while an extended beta-hairpin is found that lines the wall of the exit tunnel in the center of the 70S ribosome. In Verminephrobacter eiseniae (strain EF01-2), this protein is Large ribosomal subunit protein uL22.